The chain runs to 59 residues: Potassium channel toxin alpha-KTx 4.5 (59 aa).

An N-terminal signal peptide occupies residues 1–22 (MKAFYGVLIIFILISMLDLSQQ). Disulfide bonds link C29/C50, C35/C55, and C39/C57. The interaction with Ca(2+)-activated K(+) channels stretch occupies residues 48 to 55 (GKCMNGKC).

Expressed by the venom gland.

The protein resides in the secreted. Functionally, inhibits with low potency Kv1.1/KCNA1, Kv1.2/KCNA2, Kv1.3/KCNA3 and Kv11.1/KCNH2/ERG1 voltage-gated potassium channels. The polypeptide is Potassium channel toxin alpha-KTx 4.5 (Tityus costatus (Brazilian scorpion)).